A 477-amino-acid chain; its full sequence is Aspartyl/glutamyl-tRNA(Asn/Gln) amidotransferase subunit B (477 aa).

The protein belongs to the GatB/GatE family. GatB subfamily. Heterotrimer of A, B and C subunits.

The enzyme catalyses L-glutamyl-tRNA(Gln) + L-glutamine + ATP + H2O = L-glutaminyl-tRNA(Gln) + L-glutamate + ADP + phosphate + H(+). The catalysed reaction is L-aspartyl-tRNA(Asn) + L-glutamine + ATP + H2O = L-asparaginyl-tRNA(Asn) + L-glutamate + ADP + phosphate + 2 H(+). Functionally, allows the formation of correctly charged Asn-tRNA(Asn) or Gln-tRNA(Gln) through the transamidation of misacylated Asp-tRNA(Asn) or Glu-tRNA(Gln) in organisms which lack either or both of asparaginyl-tRNA or glutaminyl-tRNA synthetases. The reaction takes place in the presence of glutamine and ATP through an activated phospho-Asp-tRNA(Asn) or phospho-Glu-tRNA(Gln). In Legionella pneumophila (strain Paris), this protein is Aspartyl/glutamyl-tRNA(Asn/Gln) amidotransferase subunit B.